Here is a 105-residue protein sequence, read N- to C-terminus: Large ribosomal subunit protein eL42 (105 aa).

The segment at 23 to 61 (KVTQYKKGKESKFAQGRRRYDRKQSGFGGQTKPIFRKKA) is disordered.

It belongs to the eukaryotic ribosomal protein eL42 family.

The sequence is that of Large ribosomal subunit protein eL42 from Caenorhabditis elegans.